A 325-amino-acid chain; its full sequence is Ribonucleoside-diphosphate reductase small chain (325 aa).

Positions 76, 107, and 110 each coordinate Fe cation. Tyr-114 is an active-site residue. Fe cation contacts are provided by Glu-170, Glu-204, and His-207.

It belongs to the ribonucleoside diphosphate reductase small chain family. In terms of assembly, heterodimer of a large and a small subunit. It depends on Fe cation as a cofactor.

It catalyses the reaction a 2'-deoxyribonucleoside 5'-diphosphate + [thioredoxin]-disulfide + H2O = a ribonucleoside 5'-diphosphate + [thioredoxin]-dithiol. Its function is as follows. Provides the precursors necessary for DNA synthesis. Catalyzes the biosynthesis of deoxyribonucleotides from the corresponding ribonucleotides. The sequence is that of Ribonucleoside-diphosphate reductase small chain from Encephalitozoon cuniculi (strain GB-M1) (Microsporidian parasite).